A 398-amino-acid chain; its full sequence is Elongation factor Tu (398 aa).

Residues 10–207 (KIHLNVGTIG…ILDKNIPVPN (198 aa)) form the tr-type G domain. The segment at 19-26 (GHVDHGKT) is G1. 19–26 (GHVDHGKT) provides a ligand contact to GTP. Threonine 26 is a Mg(2+) binding site. The interval 60 to 64 (GITIS) is G2. Positions 81-84 (DCPG) are G3. GTP is bound by residues 81-85 (DCPGH) and 136-139 (NKAD). The interval 136–139 (NKAD) is G4. The G5 stretch occupies residues 174–176 (SAL).

Belongs to the TRAFAC class translation factor GTPase superfamily. Classic translation factor GTPase family. EF-Tu/EF-1A subfamily. As to quaternary structure, monomer.

The protein resides in the cytoplasm. The catalysed reaction is GTP + H2O = GDP + phosphate + H(+). In terms of biological role, GTP hydrolase that promotes the GTP-dependent binding of aminoacyl-tRNA to the A-site of ribosomes during protein biosynthesis. The polypeptide is Elongation factor Tu (Carsonella ruddii (strain PV)).